The chain runs to 137 residues: uncharacterized protein (137 aa).

Residues 116 to 137 are disordered; it reads ARPPRGSGGTRTARNGARTASE. The segment covering 125–137 has biased composition (polar residues); the sequence is TRTARNGARTASE.

This is an uncharacterized protein from Mycobacterium bovis (strain ATCC BAA-935 / AF2122/97).